The primary structure comprises 443 residues: Ribosomal protein uS12 methylthiotransferase RimO (443 aa).

An MTTase N-terminal domain is found at 10 to 120 (PRVGFVSLGC…VMQAVHRHLP (111 aa)). Positions 19, 55, 84, 151, 155, and 158 each coordinate [4Fe-4S] cluster. Residues 137-375 (LTPQHYAYLK…DFQEDISTQR (239 aa)) enclose the Radical SAM core domain. The TRAM domain occupies 377 to 443 (EAKIGREMTV…IHDLYAERVV (67 aa)).

It belongs to the methylthiotransferase family. RimO subfamily. [4Fe-4S] cluster is required as a cofactor.

It is found in the cytoplasm. The catalysed reaction is L-aspartate(89)-[ribosomal protein uS12]-hydrogen + (sulfur carrier)-SH + AH2 + 2 S-adenosyl-L-methionine = 3-methylsulfanyl-L-aspartate(89)-[ribosomal protein uS12]-hydrogen + (sulfur carrier)-H + 5'-deoxyadenosine + L-methionine + A + S-adenosyl-L-homocysteine + 2 H(+). In terms of biological role, catalyzes the methylthiolation of an aspartic acid residue of ribosomal protein uS12. This chain is Ribosomal protein uS12 methylthiotransferase RimO, found in Azoarcus sp. (strain BH72).